A 394-amino-acid chain; its full sequence is Cytochrome b561 and DOMON domain-containing protein At4g12980 (394 aa).

The N-terminal stretch at 1–24 (MDSSYLRISLSFLFWALLLSPAVS) is a signal peptide. The DOMON domain maps to 49–169 (LKAILHYSYD…GKVNQVWQVG (121 aa)). The 198-residue stretch at 184–381 (GPNLNSVGSL…LEVVTWVIVL (198 aa)) folds into the Cytochrome b561 domain. 2 consecutive transmembrane segments (helical) span residues 220 to 240 (IHGILNAVSWGLLFPIGAMIA) and 252 to 272 (AWFYLHVSCQFSAYVIGVAGW). 3 residues coordinate heme b: H221, H257, and H290. The chain crosses the membrane as a helical span at residues 292–312 (NIGICLFSIATLQMFAMLLRP). H326 contacts heme b. The next 2 membrane-spanning stretches (helical) occupy residues 328–348 (GVGYSILILGIINVFKGLSIL) and 361–381 (VIGTLGGITLLLEVVTWVIVL).

Requires heme b as cofactor.

The protein resides in the membrane. May act as a catecholamine-responsive trans-membrane electron transporter. The polypeptide is Cytochrome b561 and DOMON domain-containing protein At4g12980 (Arabidopsis thaliana (Mouse-ear cress)).